The chain runs to 462 residues: Integrator complex subunit 12 (462 aa).

The interval 42 to 129 is disordered; that stretch reads GIDSSYRPSQ…LEKPETQSSP (88 aa). The segment covering 59–86 has biased composition (polar residues); it reads ISSTKNISIKQEPKISSSLPSGNNNGKV. A Glycyl lysine isopeptide (Lys-Gly) (interchain with G-Cter in SUMO2) cross-link involves residue Lys68. Residues 88–124 show a composition bias toward basic and acidic residues; the sequence is TTEKVKKEAEKRPADKMKSDITEGVDIPKKPRLEKPE. Position 128 is a phosphoserine (Ser128). A PHD-type zinc finger spans residues 159–215; it reads GLACVVCRQMMVASGNQLVECQECHNLYHRDCHKPQVTDKEANDPRLVWYCARCTRQ. Lys254 participates in a covalent cross-link: Glycyl lysine isopeptide (Lys-Gly) (interchain with G-Cter in SUMO2). Residues 301–328 are compositionally biased toward polar residues; the sequence is SSAGPSTAKLSSTTQNSTGKPATSSANQ. A disordered region spans residues 301–462; that stretch reads SSAGPSTAKL…KKAAQKKLKK (162 aa). Composition is skewed to low complexity over residues 347 to 358 and 396 to 437; these read KIGSNNSTTPTV and GNSS…GPTS. Residues 449 to 462 are compositionally biased toward basic residues; that stretch reads QMVKKKAAQKKLKK.

It belongs to the Integrator subunit 12 family. In terms of assembly, component of the Integrator complex, composed of core subunits INTS1, INTS2, INTS3, INTS4, INTS5, INTS6, INTS7, INTS8, INTS9/RC74, INTS10, INTS11/CPSF3L, INTS12, INTS13, INTS14 and INTS15. The core complex associates with protein phosphatase 2A subunits PPP2CA and PPP2R1A, to form the Integrator-PP2A (INTAC) complex. Post-translationally, dephosphorylated at Ser-128 by the PNUTS-PP1 complex, promoting RNA polymerase II transcription pause-release.

The protein localises to the nucleus. Its function is as follows. Component of the integrator complex, a multiprotein complex that terminates RNA polymerase II (Pol II) transcription in the promoter-proximal region of genes. The integrator complex provides a quality checkpoint during transcription elongation by driving premature transcription termination of transcripts that are unfavorably configured for transcriptional elongation: the complex terminates transcription by (1) catalyzing dephosphorylation of the C-terminal domain (CTD) of Pol II subunit POLR2A/RPB1 and SUPT5H/SPT5, (2) degrading the exiting nascent RNA transcript via endonuclease activity and (3) promoting the release of Pol II from bound DNA. The integrator complex is also involved in terminating the synthesis of non-coding Pol II transcripts, such as enhancer RNAs (eRNAs), small nuclear RNAs (snRNAs), telomerase RNAs and long non-coding RNAs (lncRNAs). Mediates recruitment of cytoplasmic dynein to the nuclear envelope, probably as component of the integrator complex. This chain is Integrator complex subunit 12 (INTS12), found in Macaca fascicularis (Crab-eating macaque).